A 1369-amino-acid polypeptide reads, in one-letter code: Microtubule-associated tumor suppressor candidate 2 (1369 aa).

Disordered stretches follow at residues 180–262 (ASSS…TQTV), 374–442 (GRGN…FIPN), 477–509 (GENK…VAEN), 582–627 (NTSP…EERT), 791–839 (RSSA…LRPP), 861–992 (SSVS…QARE), and 1331–1369 (WKLQ…TTPR). Polar residues-rich tracts occupy residues 246–262 (PSTS…TQTV) and 392–401 (LHTTPKQGSA). The interval 641–980 (RPKIITYIRR…PKQRTAAARN (340 aa)) is mediates interaction with MAPRE1. A sufficient for interaction with KIF2C region spans residues 801–890 (GPITTATSLY…TRSTFGNEEQ (90 aa)). Positions 801 to 1150 (GPITTATSLY…HDAALLEMEN (350 aa)) are localization to the growing distal tip of microtubules. Polar residues predominate over residues 804-814 (TTATSLYSSDP). Residues 821-834 (ASSSNAAKSNLPKS) are compositionally biased toward low complexity. Over residues 937-947 (TKKDAQKDQDT) the composition is skewed to basic and acidic residues. Residues 991 to 1335 (REAERQLVLR…NEELLWKLQT (345 aa)) adopt a coiled-coil conformation. Residues 1348 to 1369 (SPVYRGSSSGPSSPARVSTTPR) show a composition bias toward low complexity.

It in the C-terminal section; belongs to the MTUS1 family. As to quaternary structure, homodimer. Interacts with KIF2C and MAPRE1; the interaction is direct and probably targets MTUS2 and KIF2C to microtubules. In terms of tissue distribution, detected in embryonic stem cells differentiating to cardiomyocytes.

The protein resides in the cytoplasm. Its subcellular location is the cytoskeleton. Binds microtubules. Together with MAPRE1 may target the microtubule depolymerase KIF2C to the plus-end of microtubules. May regulate the dynamics of microtubules at their growing distal tip. The chain is Microtubule-associated tumor suppressor candidate 2 (MTUS2) from Homo sapiens (Human).